The primary structure comprises 171 residues: Putative phosphoesterase BH1439 (171 aa).

Histidine 34 (proton donor) is an active-site residue. 2 consecutive short sequence motifs (HXTX) follow at residues 34 to 37 (HVTL) and 115 to 118 (HLTI). The Proton acceptor role is filled by histidine 115.

It belongs to the 2H phosphoesterase superfamily. YjcG family.

In Halalkalibacterium halodurans (strain ATCC BAA-125 / DSM 18197 / FERM 7344 / JCM 9153 / C-125) (Bacillus halodurans), this protein is Putative phosphoesterase BH1439.